Here is a 368-residue protein sequence, read N- to C-terminus: MRFPELEELKNRRTLKWTRFPEDVLPLWVAESDFGTCPQLKEAMADAVEREVFGYPPDATGLNDALTGFYERRYGFGPNPESVFAIPDVVRGLKLAIEHFTKPGSAIIVPLPAYPPFIELPKVTGRQAIYIDAHEYDLKEIEKAFADGAGSLLFCNPHNPLGTVFSEEYIRELTDIAAKYDARIIVDEIHAPLVYEGTHVVAAGVSENAANTCITITATSKAWNTAGLKCAQIFFSNEADVKAWKNLSDITRDGVSILGLIAAETVYNEGEEFLDESIQILKDNRDFAAAELEKLGVKVYAPDSTYLMWLDFAGTKIEEAPSKILREEGKVMLNDGAAFGGFTTCARLNFACSRETLEEGLRRIASVL.

The residue at position 221 (lysine 221) is an N6-(pyridoxal phosphate)lysine.

This sequence belongs to the class-II pyridoxal-phosphate-dependent aminotransferase family. MalY/PatB cystathionine beta-lyase subfamily. The cofactor is pyridoxal 5'-phosphate.

It catalyses the reaction L,L-cystathionine + H2O = L-homocysteine + pyruvate + NH4(+). The enzyme catalyses an S-substituted L-cysteine + H2O = a thiol + pyruvate + NH4(+). It functions in the pathway amino-acid biosynthesis; L-methionine biosynthesis via de novo pathway; L-homocysteine from L-cystathionine: step 1/1. Catalyzes the transformation of cystathionine to homocysteine. The protein is Cystathionine beta-lyase (metC) of Corynebacterium glutamicum (Brevibacterium saccharolyticum).